The following is a 476-amino-acid chain: Aspartyl/glutamyl-tRNA(Asn/Gln) amidotransferase subunit B (476 aa).

It belongs to the GatB/GatE family. GatB subfamily. Heterotrimer of A, B and C subunits.

The enzyme catalyses L-glutamyl-tRNA(Gln) + L-glutamine + ATP + H2O = L-glutaminyl-tRNA(Gln) + L-glutamate + ADP + phosphate + H(+). The catalysed reaction is L-aspartyl-tRNA(Asn) + L-glutamine + ATP + H2O = L-asparaginyl-tRNA(Asn) + L-glutamate + ADP + phosphate + 2 H(+). Functionally, allows the formation of correctly charged Asn-tRNA(Asn) or Gln-tRNA(Gln) through the transamidation of misacylated Asp-tRNA(Asn) or Glu-tRNA(Gln) in organisms which lack either or both of asparaginyl-tRNA or glutaminyl-tRNA synthetases. The reaction takes place in the presence of glutamine and ATP through an activated phospho-Asp-tRNA(Asn) or phospho-Glu-tRNA(Gln). The chain is Aspartyl/glutamyl-tRNA(Asn/Gln) amidotransferase subunit B from Albidiferax ferrireducens (strain ATCC BAA-621 / DSM 15236 / T118) (Rhodoferax ferrireducens).